The sequence spans 446 residues: Neuropeptide Y receptor type 5 (446 aa).

At 1–42 (MGSEIPDYYNKTLASENNTVATRNSGFPVWEDYKGSVDDLQY) the chain is on the extracellular side. 2 N-linked (GlcNAc...) asparagine glycosylation sites follow: Asn-10 and Asn-17. A helical membrane pass occupies residues 43–63 (FLIGLYTFVSLLGFMGNLLIL). The Cytoplasmic segment spans residues 64–77 (MAVMRKRNQKTTVN). Residues 78–98 (FLIGNLAFSDILVVLFCSPFT) form a helical membrane-spanning segment. Residues 99–117 (LTSVLLDQWMFGKVMCHIM) lie on the Extracellular side of the membrane. A disulfide bridge links Cys-114 with Cys-198. Residues 118–138 (PFLQCVTVLVSTLILISIAIV) form a helical membrane-spanning segment. Residues 139-156 (RYHMIKHPVSNNLTANHG) lie on the Cytoplasmic side of the membrane. The helical transmembrane segment at 157–177 (YFLIATVWTLGLAICSPLPVF) threads the bilayer. Topologically, residues 178 to 208 (HSLVELQESFGSAWLSSRYLCVESWPSDSYR) are extracellular. The chain crosses the membrane as a helical span at residues 209–229 (IAFTISLLLVQYILPLVCLTV). Over 230–369 (SHTSVCRTIS…RKRSRSVFYR (140 aa)) the chain is Cytoplasmic. The tract at residues 297-325 (RPAPAGPALESREGRPPGKVGSMQSQPPP) is disordered. Residues 370–390 (LTVLILVFAVSWMPLHLFHVV) form a helical membrane-spanning segment. Topologically, residues 391-407 (TDFNDNLISNRHFKLVY) are extracellular. Residues 408–428 (CICHLLGMMSCCLNPILYGFL) traverse the membrane as a helical segment. Topologically, residues 429 to 446 (NNGIKADLMSLIHCLHVS) are cytoplasmic. Residue Cys-442 is the site of S-palmitoyl cysteine attachment.

It belongs to the G-protein coupled receptor 1 family.

It is found in the cell membrane. Receptor for neuropeptide Y and peptide YY. The activity of this receptor is mediated by G proteins that inhibit adenylate cyclase activity. Seems to be associated with food intake. Could be involved in feeding disorders. This Sus scrofa (Pig) protein is Neuropeptide Y receptor type 5 (NPY5R).